A 257-amino-acid chain; its full sequence is Triosephosphate isomerase (257 aa).

Substrate-binding residues include asparagine 11 and lysine 13. Catalysis depends on histidine 96, which acts as the Electrophile. The Proton acceptor role is filled by glutamate 170.

It belongs to the triosephosphate isomerase family. In terms of assembly, homodimer.

It catalyses the reaction D-glyceraldehyde 3-phosphate = dihydroxyacetone phosphate. It functions in the pathway carbohydrate biosynthesis; gluconeogenesis. Its pathway is carbohydrate degradation; glycolysis; D-glyceraldehyde 3-phosphate from glycerone phosphate: step 1/1. This Giardia intestinalis (Giardia lamblia) protein is Triosephosphate isomerase.